We begin with the raw amino-acid sequence, 35 residues long: Beta-theraphotoxin-Hlv1a (35 aa).

3 cysteine pairs are disulfide-bonded: C2/C17, C9/C24, and C16/C31.

Belongs to the neurotoxin 10 (Hwtx-1) family. 10 (haplotoxin-1) subfamily. Expressed by the venom gland.

The protein localises to the secreted. Its function is as follows. Spider venom neurotoxin that blocks voltage-gated sodium channel Nav1.3/SCN3A in human (IC(50)=1 uM) and rat (IC(50)=1 uM). This chain is Beta-theraphotoxin-Hlv1a, found in Cyriopagopus lividus (Cobalt blue tarantula).